The primary structure comprises 286 residues: Bifunctional protein FolD (286 aa).

Residues 165 to 167 (GRS) and Ser-190 each bind NADP(+).

Belongs to the tetrahydrofolate dehydrogenase/cyclohydrolase family. Homodimer.

The catalysed reaction is (6R)-5,10-methylene-5,6,7,8-tetrahydrofolate + NADP(+) = (6R)-5,10-methenyltetrahydrofolate + NADPH. It carries out the reaction (6R)-5,10-methenyltetrahydrofolate + H2O = (6R)-10-formyltetrahydrofolate + H(+). Its pathway is one-carbon metabolism; tetrahydrofolate interconversion. Functionally, catalyzes the oxidation of 5,10-methylenetetrahydrofolate to 5,10-methenyltetrahydrofolate and then the hydrolysis of 5,10-methenyltetrahydrofolate to 10-formyltetrahydrofolate. The protein is Bifunctional protein FolD of Staphylococcus aureus (strain JH9).